Reading from the N-terminus, the 198-residue chain is 3-isopropylmalate dehydratase small subunit (198 aa).

The protein belongs to the LeuD family. LeuD type 1 subfamily. In terms of assembly, heterodimer of LeuC and LeuD.

It catalyses the reaction (2R,3S)-3-isopropylmalate = (2S)-2-isopropylmalate. The protein operates within amino-acid biosynthesis; L-leucine biosynthesis; L-leucine from 3-methyl-2-oxobutanoate: step 2/4. Functionally, catalyzes the isomerization between 2-isopropylmalate and 3-isopropylmalate, via the formation of 2-isopropylmaleate. The chain is 3-isopropylmalate dehydratase small subunit from Mycobacterium avium (strain 104).